The primary structure comprises 169 residues: Peptide methionine sulfoxide reductase MsrA (169 aa).

Cys10 is a catalytic residue.

It belongs to the MsrA Met sulfoxide reductase family.

It carries out the reaction L-methionyl-[protein] + [thioredoxin]-disulfide + H2O = L-methionyl-(S)-S-oxide-[protein] + [thioredoxin]-dithiol. The enzyme catalyses [thioredoxin]-disulfide + L-methionine + H2O = L-methionine (S)-S-oxide + [thioredoxin]-dithiol. Its function is as follows. Has an important function as a repair enzyme for proteins that have been inactivated by oxidation. Catalyzes the reversible oxidation-reduction of methionine sulfoxide in proteins to methionine. The protein is Peptide methionine sulfoxide reductase MsrA of Streptococcus pyogenes serotype M28 (strain MGAS6180).